Here is a 550-residue protein sequence, read N- to C-terminus: Hydroxylamine reductase (550 aa).

[2Fe-2S] cluster is bound by residues C3, C6, C18, and C25. Hybrid [4Fe-2O-2S] cluster-binding residues include H249, E273, C317, C405, C433, C458, E492, and K494. C405 is modified (cysteine persulfide).

Belongs to the HCP family. Requires [2Fe-2S] cluster as cofactor. It depends on hybrid [4Fe-2O-2S] cluster as a cofactor.

The protein resides in the cytoplasm. The catalysed reaction is A + NH4(+) + H2O = hydroxylamine + AH2 + H(+). Its function is as follows. Catalyzes the reduction of hydroxylamine to form NH(3) and H(2)O. This chain is Hydroxylamine reductase, found in Salmonella typhimurium (strain LT2 / SGSC1412 / ATCC 700720).